The sequence spans 412 residues: FAD-dependent monooxygenase nscC (412 aa).

Residues 1–21 form the signal peptide; it reads MGKQQETILIIGAGIAGLTTS. Positions 35 and 46 each coordinate FAD. Residue Asn92 is glycosylated (N-linked (GlcNAc...) asparagine). FAD is bound at residue Arg119. Residues Asn170 and Asn231 are each glycosylated (N-linked (GlcNAc...) asparagine). The FAD site is built by Asp326 and Gly339.

The protein belongs to the paxM FAD-dependent monooxygenase family. FAD serves as cofactor.

It functions in the pathway secondary metabolite biosynthesis. Its function is as follows. FAD-dependent monooxygenase; part of the gene cluster that mediates the biosynthesis of neosartoricin B, a prenylated anthracenone that probably exhibits T-cell antiproliferative activity, suggestive of a physiological role as an immunosuppressive agent. The non-reducing polyketide synthase nscA probably synthesizes and cyclizes the decaketide backbone. The hydrolase nscB then mediates the product release through hydrolysis followed by spontaneous decarboxylation. The prenyltransferase nscD catalyzes the addition of the dimethylallyl group to the aromatic C5. The FAD-dependent monooxygenase nscC is then responsible for the stereospecific hydroxylation at C2. Neosartoricin B can be converted into two additional compounds neosartoricins C and D. Neosartoricin C is a spirocyclic compound that is cyclized through the attack of C3 hydroxyl on C14, followed by dehydration. On the other hand, neosartoricin D is a further cyclized compound in which attack of C2 on C14 in neosartoricin C results in the formation of the acetal-containing dioxabicyclo-octanone ring. Both of these compounds are novel and possibly represent related metabolites of the gene cluster. The sequence is that of FAD-dependent monooxygenase nscC from Trichophyton verrucosum (strain HKI 0517).